A 350-amino-acid polypeptide reads, in one-letter code: Beta-hexosaminidase (350 aa).

Substrate-binding positions include Asp-62, Arg-70, Arg-133, and 163–164 (KH). The active-site Proton donor/acceptor is the His-176. The Nucleophile role is filled by Asp-248.

Belongs to the glycosyl hydrolase 3 family. NagZ subfamily.

The protein localises to the cytoplasm. It catalyses the reaction Hydrolysis of terminal non-reducing N-acetyl-D-hexosamine residues in N-acetyl-beta-D-hexosaminides.. It participates in cell wall biogenesis; peptidoglycan recycling. In terms of biological role, plays a role in peptidoglycan recycling by cleaving the terminal beta-1,4-linked N-acetylglucosamine (GlcNAc) from peptide-linked peptidoglycan fragments, giving rise to free GlcNAc, anhydro-N-acetylmuramic acid and anhydro-N-acetylmuramic acid-linked peptides. This chain is Beta-hexosaminidase, found in Haemophilus influenzae (strain PittEE).